The primary structure comprises 207 residues: Histone H1-like protein HC2 (207 aa).

Basic residues-rich tracts occupy residues 1–50 (MLGV…KTVA) and 59–72 (PAAK…APVR). Residues 1–72 (MLGVQKKRST…KTAAKKAPVR (72 aa)) form a disordered region. Tandem repeats lie at residues 35–58 (VRKV…AARK), 71–94 (VRKV…AARK), and 113–136 (VRKV…AARK). A 3 X 24 AA repeats of V-R-K-V-A-A-K-K-T-V-A-R-K-T-V-A-K-K-A-V-A-A-R-K region spans residues 35 to 136 (VRKVAAKKTV…VAKKAVAARK (102 aa)).

It belongs to the histone H1/H5 family. HCT subfamily.

In terms of biological role, might have a role in establishing the nucleoid structure of elementary bodies. The polypeptide is Histone H1-like protein HC2 (hctB) (Chlamydia muridarum (strain MoPn / Nigg)).